The following is a 544-amino-acid chain: Prolyl 4-hydroxylase subunit alpha-3 (544 aa).

The signal sequence occupies residues 1-19 (MGPGARLAALLAVLALGTG). The stretch at 107–131 (LEASENIRALKDGYEKVEQDLPAFE) forms a coiled coil. The stretch at 227 to 260 (EDALDHLAFAYFRAGNVSCALSLSREFLLYSPDN) is one TPR repeat. An N-linked (GlcNAc...) asparagine glycan is attached at Asn-242. The 108-residue stretch at 422–529 (YAEYLQVVNY…KWVANKWIHE (108 aa)) folds into the Fe2OG dioxygenase domain. 2 residues coordinate Fe cation: His-440 and Asp-442. A glycan (N-linked (GlcNAc...) asparagine) is linked at Asn-482. His-510 contacts Fe cation. Lys-520 is a binding site for 2-oxoglutarate.

Belongs to the P4HA family. Heterotetramer of two alpha-3 chains and two beta chains (the beta chain is the multi-functional PDI). Requires Fe(2+) as cofactor. The cofactor is L-ascorbate. In terms of processing, N-glycosylation plays no role in the catalytic activity. As to expression, highly expressed in placenta, liver and fetal skin. Weakly expressed in fetal epiphyseal cartilage, fetal liver, fibroblast, lung and skeletal muscle. Expressed also in fibrous cap of carotid atherosclerotic lesions.

It localises to the endoplasmic reticulum lumen. It carries out the reaction L-prolyl-[collagen] + 2-oxoglutarate + O2 = trans-4-hydroxy-L-prolyl-[collagen] + succinate + CO2. Catalyzes the post-translational formation of 4-hydroxyproline in -Xaa-Pro-Gly- sequences in collagens and other proteins. This Homo sapiens (Human) protein is Prolyl 4-hydroxylase subunit alpha-3 (P4HA3).